The chain runs to 726 residues: Bromodomain-containing protein 3 (726 aa).

The segment at methionine 1–lysine 35 is disordered. Serine 2 carries the post-translational modification N-acetylserine. A compositionally biased stretch (pro residues) spans threonine 15 to valine 26. The region spanning arginine 34–methionine 140 is the Bromo 1 domain. The tract at residues lysine 78–proline 80 is acetylated histone H3 binding. Disordered regions lie at residues proline 149 to glutamine 169 and valine 237 to lysine 305. The segment covering threonine 248–serine 261 has biased composition (low complexity). Serine 263 and serine 281 each carry phosphoserine. One can recognise a Bromo 2 domain in the interval glycine 306–methionine 415. Residue lysine 414 forms a Glycyl lysine isopeptide (Lys-Gly) (interchain with G-Cter in SUMO2) linkage. Disordered regions lie at residues glutamate 421–arginine 462, leucine 477–aspartate 575, and leucine 637–glutamate 726. Residues serine 453 to alanine 524 are a coiled coil. Basic residues predominate over residues lysine 487–aspartate 503. Over residues lysine 504–alanine 521 the composition is skewed to basic and acidic residues. Positions valine 523 to alanine 540 are enriched in low complexity. Positions aspartate 562 to proline 644 constitute an NET domain. Phosphoserine is present on serine 563. Positions phenylalanine 645–lysine 684 form a coiled coil. The segment covering lysine 655–glutamine 673 has biased composition (basic and acidic residues). Residues glycine 692 to glutamate 726 are compositionally biased toward low complexity.

It belongs to the BET family. As to quaternary structure, interacts (via bromo domain 1) with GATA1 acetylated at 'Lys-312' and 'Lys-315'. Interacts (via bromo domain 1) with GATA2 acetylated on lysine residues. Interacts (via NET domain) with CHD4 (via KIKL motif). Interacts (via NET domain) with SMARCA4 (via KIKL motif). Interacts (via NET domain) with NSD3 (via KIKL motif). (Microbial infection) Interacts with the Integrase protein of Moloney murine leukemia virus (MLV). Ubiquitous.

The protein resides in the nucleus. It is found in the chromosome. Inhibited by JQ1, a thieno-triazolo-1,4-diazepine derivative, which specifically inhibits members of the BET family (BRD2, BRD3 and BRD4). The first bromo domain is inhibited by GSK778 (iBET-BD1), which specifically inhibits the first bromo domain of members of the BET family (BRD2, BRD3 and BRD4). The second bromo domain is inhibited by ABBV-744, which specifically inhibits the second bromo domain of members of the BET family (BRD2, BRD3 and BRD4). The second bromo domain is inhibited by GSK046 (iBET-BD2), which specifically inhibits the second bromo domain of members of the BET family (BRD2, BRD3 and BRD4). Its function is as follows. Chromatin reader that recognizes and binds acetylated histones, thereby controlling gene expression and remodeling chromatin structures. Recruits transcription factors and coactivators to target gene sites, and activates RNA polymerase II machinery for transcriptional elongation. In vitro, binds acetylated lysine residues on the N-terminus of histone H2A, H2B, H3 and H4. Involved in endoderm differentiation via its association with long non-coding RNA (lncRNA) DIGIT: BRD3 undergoes liquid-liquid phase separation upon binding to lncRNA DIGIT, promoting binding to histone H3 acetylated at 'Lys-18' (H3K18ac) to induce endoderm gene expression. Also binds non-histones acetylated proteins, such as GATA1 and GATA2: regulates transcription by promoting the binding of the transcription factor GATA1 to its targets. This chain is Bromodomain-containing protein 3, found in Homo sapiens (Human).